The primary structure comprises 220 residues: 1-Cys peroxiredoxin B (220 aa).

Positions 4 to 165 constitute a Thioredoxin domain; it reads LTLGDVVPDL…VLRATDALLT (162 aa). C46 (cysteine sulfenic acid (-SOH) intermediate) is an active-site residue. Residues 195–218 carry the Bipartite nuclear localization signal motif; sequence KARFPAGFETAQLPSNKCYLRFTQ.

The protein belongs to the peroxiredoxin family. Prx6 subfamily.

The protein localises to the nucleus. It localises to the cytoplasm. The catalysed reaction is a hydroperoxide + [thioredoxin]-dithiol = an alcohol + [thioredoxin]-disulfide + H2O. Thiol-specific peroxidase that catalyzes the reduction of hydrogen peroxide and organic hydroperoxides to water and alcohols, respectively. Seems to contribute to the inhibition of germination during stress. The chain is 1-Cys peroxiredoxin B from Oryza sativa subsp. japonica (Rice).